The primary structure comprises 357 residues: Isopentenyl-diphosphate delta-isomerase (357 aa).

R12–K13 contributes to the substrate binding site. FMN is bound by residues S70, S71–T73, S101, and N130. Residue S101 to R103 participates in substrate binding. Residue Q165 participates in substrate binding. Mg(2+) is bound at residue E166. Residues K197 and A310–R311 contribute to the FMN site.

The protein belongs to the IPP isomerase type 2 family. In terms of assembly, homooctamer. Dimer of tetramers. The cofactor is FMN. It depends on NADPH as a cofactor. Mg(2+) is required as a cofactor.

It is found in the cytoplasm. The enzyme catalyses isopentenyl diphosphate = dimethylallyl diphosphate. Involved in the biosynthesis of isoprenoids. Catalyzes the 1,3-allylic rearrangement of the homoallylic substrate isopentenyl (IPP) to its allylic isomer, dimethylallyl diphosphate (DMAPP). This Pelodictyon phaeoclathratiforme (strain DSM 5477 / BU-1) protein is Isopentenyl-diphosphate delta-isomerase.